The following is a 354-amino-acid chain: Glycerol-3-phosphate dehydrogenase [NAD(+)], glycosomal (354 aa).

NAD(+)-binding positions include 15-20, F90, K118, and A150; that span reads GSGAFG. K118 lines the substrate pocket. The active-site Proton acceptor is the K203. NAD(+) is bound by residues R267 and E293. 267 to 268 serves as a coordination point for substrate; that stretch reads RN. The short motif at 352-354 is the Microbody targeting signal element; the sequence is SKM.

The protein belongs to the NAD-dependent glycerol-3-phosphate dehydrogenase family.

The protein resides in the glycosome. The catalysed reaction is sn-glycerol 3-phosphate + NAD(+) = dihydroxyacetone phosphate + NADH + H(+). The protein is Glycerol-3-phosphate dehydrogenase [NAD(+)], glycosomal (GPD) of Trypanosoma brucei brucei.